A 389-amino-acid chain; its full sequence is Exodeoxyribonuclease 7 large subunit (389 aa).

Belongs to the XseA family. As to quaternary structure, heterooligomer composed of large and small subunits.

It is found in the cytoplasm. The enzyme catalyses Exonucleolytic cleavage in either 5'- to 3'- or 3'- to 5'-direction to yield nucleoside 5'-phosphates.. Bidirectionally degrades single-stranded DNA into large acid-insoluble oligonucleotides, which are then degraded further into small acid-soluble oligonucleotides. In Pseudothermotoga lettingae (strain ATCC BAA-301 / DSM 14385 / NBRC 107922 / TMO) (Thermotoga lettingae), this protein is Exodeoxyribonuclease 7 large subunit.